A 286-amino-acid polypeptide reads, in one-letter code: Cytochrome bo(3) ubiquinol oxidase subunit 2 (286 aa).

Positions 1 to 24 are cleaved as a signal peptide; the sequence is MQFIKYKSYILKFLLVSCIFCING. Cysteine 25 is lipidated: N-palmitoyl cysteine. Cysteine 25 carries the S-diacylglycerol cysteine lipid modification. Over 25–44 the chain is Extracellular; the sequence is CDCTILCPNGLIAQEQRFVL. Residues 45–67 traverse the membrane as a helical segment; it reads FVSFFTMLLIIIPVIFMTIFFVL. Residues 68–85 are Cytoplasmic-facing; sequence RYRESNFSKTYDPKWSHS. A helical transmembrane segment spans residues 86 to 108; the sequence is NIIELLIWGIPIIIIVFLSIFSW. At 109–286 the chain is on the extracellular side; the sequence is KSVHDLDPKK…VIANVLKISL (178 aa).

This sequence belongs to the cytochrome c oxidase subunit 2 family. In terms of assembly, heterooctamer of two A chains, two B chains, two C chains and two D chains.

The protein localises to the cell membrane. Its function is as follows. Cytochrome bo(3) ubiquinol terminal oxidase is the component of the aerobic respiratory chain of E.coli that predominates when cells are grown at high aeration. Has proton pump activity across the membrane in addition to electron transfer, pumping 2 protons/electron. The chain is Cytochrome bo(3) ubiquinol oxidase subunit 2 (cyoA) from Buchnera aphidicola subsp. Baizongia pistaciae (strain Bp).